The sequence spans 65 residues: Subtilisin inhibitor CLSI-I (65 aa).

It belongs to the protease inhibitor I13 (potato type I serine protease inhibitor) family.

Its function is as follows. Inhibits subtilisin-type microbial serine proteases including proteinase K, subtilisin BPN', subtilisin Carlsberg, subtilisin E, A.oryzae protease and S.griseus alkaline protease. Weakly inhibits pronase E. Does not inhibit trypsin or chymotrypsin. The polypeptide is Subtilisin inhibitor CLSI-I (Canavalia lineata (Beach bean)).